A 306-amino-acid polypeptide reads, in one-letter code: 17-beta-hydroxysteroid dehydrogenase type 3 (306 aa).

44–73 (GQWAVITGAGDGIGKAYSFELARHGLNVVL) is a binding site for NADP(+). Serine 181 is a binding site for substrate. The active-site Proton acceptor is the tyrosine 194.

Belongs to the short-chain dehydrogenases/reductases (SDR) family. 17-beta-HSD 3 subfamily.

It localises to the endoplasmic reticulum. The catalysed reaction is a 17beta-hydroxy steroid + NADP(+) = a 17-oxo steroid + NADPH + H(+). It carries out the reaction testosterone + NADP(+) = androst-4-ene-3,17-dione + NADPH + H(+). The enzyme catalyses 17beta-estradiol + NADP(+) = estrone + NADPH + H(+). It catalyses the reaction 3beta-hydroxyandrost-5-en-17-one + NADPH + H(+) = androst-5-en-3beta,17beta-diol + NADP(+). The catalysed reaction is 17beta-hydroxy-5alpha-androstan-3-one + NADP(+) = 5alpha-androstan-3,17-dione + NADPH + H(+). It carries out the reaction androsterone + NADPH + H(+) = 5alpha-androstane-3alpha,17beta-diol + NADP(+). The enzyme catalyses 3beta-hydroxy-5alpha-androstan-17-one + NADPH + H(+) = 5alpha-androstane-3beta,17beta-diol + NADP(+). It catalyses the reaction androst-4-ene-3,11,17-trione + NADPH + H(+) = 17beta-hydroxyandrost-4-ene-3,11-dione + NADP(+). The catalysed reaction is 11beta-hydroxyandrost-4-ene-3,17-dione + NADPH + H(+) = 11beta,17beta-dihydroxyandrost-4-ene-3-one + NADP(+). It functions in the pathway hormone biosynthesis; testosterone biosynthesis. Its pathway is steroid metabolism. In terms of biological role, catalyzes the conversion of 17-oxosteroids to 17beta-hydroxysteroids. Favors the reduction of androstenedione to testosterone. Testosterone is the key androgen driving male development and function. Uses NADPH while the two other EDH17B enzymes use NADH. Androgens such as epiandrosterone, dehydroepiandrosterone, androsterone and androstanedione are accepted as substrates and reduced at C-17. Can reduce 11-ketoandrostenedione as well as 11beta-hydroxyandrostenedione at C-17 to the respective testosterone forms. Plays a role in the rate-limiting-step for the maximum level of testosterone production by the testis but does not affect basal testosterone production. This Rattus norvegicus (Rat) protein is 17-beta-hydroxysteroid dehydrogenase type 3.